The primary structure comprises 349 residues: Histidinol-phosphate aminotransferase (349 aa).

The disordered stretch occupies residues 1–22 (MVSIRPSVRHTPAYVPGEQPQT). Position 207 is an N6-(pyridoxal phosphate)lysine (Lys-207).

This sequence belongs to the class-II pyridoxal-phosphate-dependent aminotransferase family. Histidinol-phosphate aminotransferase subfamily. In terms of assembly, homodimer. Requires pyridoxal 5'-phosphate as cofactor.

The enzyme catalyses L-histidinol phosphate + 2-oxoglutarate = 3-(imidazol-4-yl)-2-oxopropyl phosphate + L-glutamate. Its pathway is amino-acid biosynthesis; L-histidine biosynthesis; L-histidine from 5-phospho-alpha-D-ribose 1-diphosphate: step 7/9. This chain is Histidinol-phosphate aminotransferase (hisC), found in Synechocystis sp. (strain ATCC 27184 / PCC 6803 / Kazusa).